The chain runs to 359 residues: Serine/threonine-protein kinase SAPK7 (359 aa).

Residues 4-260 (YELLKDIGAG…IREIRNHPWF (257 aa)) enclose the Protein kinase domain. ATP-binding positions include 10–18 (IGAGNFGVA) and Lys-33. Asp-123 (proton acceptor) is an active-site residue. The disordered stretch occupies residues 299 to 359 (EEARTPPRSS…VHASGEFQLS (61 aa)). Residues 331-343 (EEQEEEEDAEDEY) show a composition bias toward acidic residues.

The protein belongs to the protein kinase superfamily. Ser/Thr protein kinase family. In terms of processing, may be phosphorylated. As to expression, weakly expressed in roots. Expressed in roots of young seedlings.

Its subcellular location is the cytoplasm. It is found in the nucleus. The enzyme catalyses L-seryl-[protein] + ATP = O-phospho-L-seryl-[protein] + ADP + H(+). It catalyses the reaction L-threonyl-[protein] + ATP = O-phospho-L-threonyl-[protein] + ADP + H(+). Activated by hyperosmotic stress. Its function is as follows. May play a role in signal transduction of hyperosmotic response. The protein is Serine/threonine-protein kinase SAPK7 (SAPK7) of Oryza sativa subsp. japonica (Rice).